The following is a 178-amino-acid chain: Small ribosomal subunit protein uS4 (178 aa).

An S4 RNA-binding domain is found at 104–166; the sequence is RRLQTLVYRK…PNSPMALENH (63 aa).

Belongs to the universal ribosomal protein uS4 family. Part of the 30S ribosomal subunit. Contacts protein S5. The interaction surface between S4 and S5 is involved in control of translational fidelity.

Its function is as follows. One of the primary rRNA binding proteins, it binds directly to 16S rRNA where it nucleates assembly of the body of the 30S subunit. Functionally, with S5 and S12 plays an important role in translational accuracy. The sequence is that of Small ribosomal subunit protein uS4 from Methanococcus vannielii (strain ATCC 35089 / DSM 1224 / JCM 13029 / OCM 148 / SB).